A 487-amino-acid chain; its full sequence is Glutamyl-tRNA(Gln) amidotransferase subunit A (487 aa).

Active-site charge relay system residues include K74 and S149. S173 functions as the Acyl-ester intermediate in the catalytic mechanism.

It belongs to the amidase family. GatA subfamily. As to quaternary structure, heterotrimer of A, B and C subunits.

The catalysed reaction is L-glutamyl-tRNA(Gln) + L-glutamine + ATP + H2O = L-glutaminyl-tRNA(Gln) + L-glutamate + ADP + phosphate + H(+). In terms of biological role, allows the formation of correctly charged Gln-tRNA(Gln) through the transamidation of misacylated Glu-tRNA(Gln) in organisms which lack glutaminyl-tRNA synthetase. The reaction takes place in the presence of glutamine and ATP through an activated gamma-phospho-Glu-tRNA(Gln). In Synechococcus sp. (strain CC9311), this protein is Glutamyl-tRNA(Gln) amidotransferase subunit A.